The primary structure comprises 257 residues: Caspase-14 (257 aa).

Residues histidine 93 and cysteine 136 contribute to the active site. Residues 156–167 constitute a propeptide that is removed on maturation; the sequence is DEELGGDEVAVL.

Belongs to the peptidase C14A family. As to quaternary structure, heterodimer of a large and a small subunit, both processed from the precursor; the mature active form is a p17/p10 dimer and the intermediate form a p20/p8 dimer. Post-translationally, maturation by proteolytic processing appears to be a two-step process. The precursor is processed by KLK7 to yield the p20/p8 intermediate form which acts the precursor to yield the p17/p10 mature form. Initially it was reported that cleavage by granzyme B, caspase-8 and -10 generates the two active subunits, however the physiological relevance has not been established. In terms of tissue distribution, embryo, adult liver and less in adult brain and kidney. Expressed in differentiating keratinocytes of embryonic skin (at protein level). Expressed in keratinocytes of adult skin suprabasal layers (at protein level).

Its subcellular location is the cytoplasm. It localises to the nucleus. Non-apoptotic caspase which is involved in epidermal differentiation. Seems to play a role in keratinocyte differentiation and is required for cornification. Regulates maturation of the epidermis by proteolytically processing filaggrin. In vitro is equally active on the synthetic caspase substrates WEHD-ACF and IETD-AFC. Involved in processing of prosaposin in the epidermis. May be involved in retinal pigment epithelium cell barrier function. This chain is Caspase-14 (Casp14), found in Mus musculus (Mouse).